Here is a 420-residue protein sequence, read N- to C-terminus: UDP-N-acetylglucosamine 1-carboxyvinyltransferase (420 aa).

K22–N23 is a phosphoenolpyruvate binding site. Residue R94 participates in UDP-N-acetyl-alpha-D-glucosamine binding. Catalysis depends on C118, which acts as the Proton donor. The residue at position 118 (C118) is a 2-(S-cysteinyl)pyruvic acid O-phosphothioketal. Positions 307 and 329 each coordinate UDP-N-acetyl-alpha-D-glucosamine.

The protein belongs to the EPSP synthase family. MurA subfamily.

Its subcellular location is the cytoplasm. It catalyses the reaction phosphoenolpyruvate + UDP-N-acetyl-alpha-D-glucosamine = UDP-N-acetyl-3-O-(1-carboxyvinyl)-alpha-D-glucosamine + phosphate. Its pathway is cell wall biogenesis; peptidoglycan biosynthesis. Its function is as follows. Cell wall formation. Adds enolpyruvyl to UDP-N-acetylglucosamine. The polypeptide is UDP-N-acetylglucosamine 1-carboxyvinyltransferase (Gluconacetobacter diazotrophicus (strain ATCC 49037 / DSM 5601 / CCUG 37298 / CIP 103539 / LMG 7603 / PAl5)).